We begin with the raw amino-acid sequence, 378 residues long: Transmembrane protein adipocyte-associated 1 homolog (378 aa).

3 N-linked (GlcNAc...) asparagine glycosylation sites follow: Asn-16, Asn-25, and Asn-36. 7 helical membrane-spanning segments follow: residues 61-81, 88-108, 136-156, 164-184, 205-225, 247-267, and 278-298; these read VMLLIPNVAFLVFLMWKLPSA, TSSPIFVAFYILVFVVAAVGI, FFLLAIELSVIILGLAFGHLE, VLAITAVLSLAYSITQGTLEI, HFWLASSCFFFLVYSLIVILP, ILALLNLVQGLGSALLCADII, and FLYFSVFAPLIYVTFLKGFFG. The interval 316 to 335 is disordered; sequence DSDVHLPHTSSSGLGRKDLD.

The protein belongs to the UPF0359 family.

The protein resides in the membrane. The sequence is that of Transmembrane protein adipocyte-associated 1 homolog (tpra1) from Danio rerio (Zebrafish).